The following is a 375-amino-acid chain: Leucoanthocyanidin dioxygenase 1 (375 aa).

The Fe2OG dioxygenase domain occupies 218–317; the sequence is LLLQLKINYY…RLSWVVFCEP (100 aa). Fe cation contacts are provided by His242, Asp244, and His298. Arg308 contacts 2-oxoglutarate.

Belongs to the iron/ascorbate-dependent oxidoreductase family. It depends on L-ascorbate as a cofactor. Fe(2+) is required as a cofactor.

The enzyme catalyses a (2R,3S,4S)-leucoanthocyanidin + 2-oxoglutarate + O2 = a 4-H-anthocyanidin with a 3-hydroxy group + succinate + CO2 + 2 H2O. The protein operates within pigment biosynthesis; anthocyanin biosynthesis. In terms of biological role, involved in anthocyanin and protoanthocyanidin biosynthesis by catalyzing the oxidation of leucoanthocyanidins into anthocyanidins. The sequence is that of Leucoanthocyanidin dioxygenase 1 from Oryza sativa subsp. japonica (Rice).